A 163-amino-acid polypeptide reads, in one-letter code: Nucleotide-binding protein Cla_1551 (163 aa).

It belongs to the YajQ family.

Functionally, nucleotide-binding protein. The polypeptide is Nucleotide-binding protein Cla_1551 (Campylobacter lari (strain RM2100 / D67 / ATCC BAA-1060)).